A 1147-amino-acid chain; its full sequence is PDZ domain-containing protein 8 (1147 aa).

A helical transmembrane segment spans residues 2–24; that stretch reads GLLLLILASAVLGSFLTLLAQFL. One can recognise an SMP-LTD domain in the interval 87–293; sequence APPTLETCYF…LPSYKIRFKP (207 aa). Positions 365–448 constitute a PDZ domain; sequence TVELIKGNLQ…RVLVYYQRPA (84 aa). A phosphoserine mark is found at S490, S515, and S532. The tract at residues 504–673 is disordered; the sequence is ELKEETQPLS…DSSDDPQMWE (170 aa). Polar residues predominate over residues 510 to 524; it reads QPLSHSPKRTPTTLS. Polar residues predominate over residues 557–576; sequence KPSTLKTSETTEAAQVSKPQ. The segment covering 580 to 596 has biased composition (pro residues); the sequence is FKPPVPPRPQGRVPLPP. The Phorbol-ester/DAG-type zinc-finger motif lies at 833–884; it reads KHSFQDTQFQNPTWCDYCKKKVWTKAASQCMFCAYVCHKKCQEKCLAETPLC. The tract at residues 948-990 is disordered; it reads RLSEPGTDLVEPSPKHTPNTSDNEGSDTEVCGSNSPSKRGNSA. A phosphoserine mark is found at S960 and S973. Positions 978 to 987 are enriched in polar residues; sequence CGSNSPSKRG. Positions 1021–1056 form a coiled coil; the sequence is PTEERIQKLEFMLDKLQNEIDQELEHNNSLVREEKE. The span at 1126 to 1137 shows a compositional bias: polar residues; it reads QLIDSQPFSNIS. Residues 1126 to 1147 are disordered; it reads QLIDSQPFSNISDDLFGPSESV.

As to quaternary structure, interacts with MSN.

The protein resides in the endoplasmic reticulum membrane. Functionally, molecular tethering protein that connects endoplasmic reticulum and mitochondria membranes. PDZD8-dependent endoplasmic reticulum-mitochondria membrane tethering is essential for endoplasmic reticulum-mitochondria Ca(2+) transfer. In neurons, involved in the regulation of dendritic Ca(2+) dynamics by regulating mitochondrial Ca(2+) uptake in neurons. The sequence is that of PDZ domain-containing protein 8 from Mus musculus (Mouse).